The chain runs to 108 residues: UPF0060 membrane protein YnfA (108 aa).

At 1-5 (MIKTT) the chain is on the periplasmic side. Residues 6 to 26 (LLFFATALCEIIGCFLPWLWL) traverse the membrane as a helical segment. The Cytoplasmic segment spans residues 27–30 (KRNA). A helical membrane pass occupies residues 31 to 51 (SIWLLLPAGISLALFVWLLTL). The Periplasmic portion of the chain corresponds to 52-60 (HPAASGRVY). The helical transmembrane segment at 61–81 (AAYGGVYVCTALMWLRVVDGV) threads the bilayer. Topologically, residues 82–84 (KLS) are cytoplasmic. The chain crosses the membrane as a helical span at residues 85 to 105 (LYDWTGALIALCGMLIIVAGW). At 106 to 108 (GRT) the chain is on the periplasmic side.

The protein belongs to the UPF0060 family.

Its subcellular location is the cell inner membrane. This is UPF0060 membrane protein YnfA from Shigella flexneri serotype 5b (strain 8401).